The chain runs to 76 residues: Small ribosomal subunit protein bS18 (76 aa).

It belongs to the bacterial ribosomal protein bS18 family. Part of the 30S ribosomal subunit. Forms a tight heterodimer with protein bS6.

In terms of biological role, binds as a heterodimer with protein bS6 to the central domain of the 16S rRNA, where it helps stabilize the platform of the 30S subunit. The sequence is that of Small ribosomal subunit protein bS18 from Carboxydothermus hydrogenoformans (strain ATCC BAA-161 / DSM 6008 / Z-2901).